The primary structure comprises 423 residues: Acyl-coenzyme A diphosphatase FITM2 (423 aa).

Residues 1-47 form a disordered region; sequence MATKRRPLRPNLGGTAGSPSSSGSNMNFRPGGPDITRSEARGTRPTA. Residues 1 to 75 lie on the Cytoplasmic side of the membrane; the sequence is MATKRRPLRP…KTIFFNTDLK (75 aa). A helical membrane pass occupies residues 76–96; sequence VALYLGSLFVISVIGDFVPFP. Residues 97 to 113 are Lumenal-facing; the sequence is KTYFARSDNLFNQYFVK. Residues 114 to 134 traverse the membrane as a helical segment; sequence IGWGWTLLFVVPFLVLSAYTI. Topologically, residues 135-146 are cytoplasmic; it reads TCGDHKRMLRHH. A helical membrane pass occupies residues 147-167; that stretch reads FPRIVIATFFWFFWTKLFNVV. Residues 168-191 are Lumenal-facing; sequence ENSYGRCTTKGYATKSSCLKAGHL. Residues 192 to 212 form a helical membrane-spanning segment; the sequence is WKGFDISGHAFILIHSSLVLI. His200 is an active-site residue. At 213 to 270 the chain is on the cytoplasmic side; sequence EEARPIIRWETIKEHIRNERHNRSTAENSGTNPLRTLNEEQMRSLQFLYKRLTPIIRT. The helical transmembrane segment at 271-291 threads the bilayer; it reads LFIGMAALQLLWDIMLVGTML. Residues 292–299 are Lumenal-facing; sequence YYHRMIEK. His294 is a catalytic residue. A helical membrane pass occupies residues 300–320; the sequence is VISGIIAILTWYFTYRFWYPT. Over 321-423 the chain is Cytoplasmic; it reads PGLLPEAPGN…RDREQQTLES (103 aa). Disordered stretches follow at residues 344–381 and 400–423; these read FKRPSHLSTGAATTSSGSNSSRTNLNGKAATTGVPRDQ and AAANLLMSDQQKRERDREQQTLES. Over residues 351-367 the composition is skewed to low complexity; that stretch reads STGAATTSSGSNSSRTN. Residues 409–423 are compositionally biased toward basic and acidic residues; sequence QQKRERDREQQTLES.

The protein belongs to the FIT family. FIT2 subfamily.

The protein localises to the endoplasmic reticulum membrane. The enzyme catalyses an acyl-CoA + H2O = an acyl-4'-phosphopantetheine + adenosine 3',5'-bisphosphate + 2 H(+). In terms of biological role, fatty acyl-coenzyme A (CoA) diphosphatase that hydrolyzes fatty acyl-CoA to yield acyl-4'-phosphopantetheine and adenosine 3',5'-bisphosphate. Preferentially hydrolyzes unsaturated long-chain acyl-CoA substrates in the endoplasmic reticulum (ER) lumen. This catalytic activity is required for maintaining ER structure and for lipid droplets (LDs) biogenesis, which are lipid storage organelles involved in maintaining lipid and energy homeostasis. May directly bind to diacylglycerol (DAGs) and triacylglycerol, which is also important for LD biogenesis. May support directional budding of nacent LDs from the ER into the cytosol by reducing DAG levels at sites of LD formation. Plays a role in the regulation of cell morphology and cytoskeletal organization. Required for correct morphology of nociceptive multi-dendritic sensory neurons. Required for normal mechanical amplification in hearing. The chain is Acyl-coenzyme A diphosphatase FITM2 from Drosophila melanogaster (Fruit fly).